The chain runs to 527 residues: Fusicoccadiene C-8 hydroxylase (527 aa).

The chain crosses the membrane as a helical span at residues 15–35 (GKPLLLFLILITLTYSLGIVF). A glycan (N-linked (GlcNAc...) asparagine) is linked at asparagine 125. Residue cysteine 465 coordinates heme. An N-linked (GlcNAc...) asparagine glycan is attached at asparagine 496.

The protein belongs to the cytochrome P450 family. It depends on heme as a cofactor.

The protein resides in the membrane. It functions in the pathway mycotoxin biosynthesis. Its function is as follows. Cytochrome P450 monooxygenase; part of the gene cluster that mediates the biosynthesis of the diterpene glucoside brassicicene C. In the first step of the brassicicene C biosynthesis, the bifunctional diterpene synthase bsc8 that possesses both prenyl transferase and terpene cyclase activity, converts isopentenyl diphosphate and dimethylallyl diphosphate into geranylgeranyl diphosphate (GGDP) that is further converted into fusicocca-2,10(14)-diene, the first precursor for brassicicene C. Fusicocca-2,10(14)-diene is then substrate of cytochrome P450 monooxygenase bsc1 for hydroxylation at the C-8 position. Oxidation at C-16 position to aldehyde is then catalyzed by the cytochrome P450 monooyxygenase bsc7, yielding fusicocca-2,10(14)-diene-8-beta,16-diol. Follows the isomerization of the double bond and reduction of aldehyde to alcohol catalyzed by the short-chain dehydrogenase/reductase bsc3 to yield the diol compound fusicocca-1,10(14)-diene-8 beta,16-diol. The next step is the oxidation at the C-3 position of fusicocca-2,10(14)-diene-8-beta,16-diol catalyzed by the alpha-ketoglutarate dependent dioxygenase bsc9, to produce a triol compound. Methylation of the hydroxy group at position 16 is performed by the methyltransferase bsc6. 16-O-methylation is followed by oxidation at the C-13 position to ketone and an alkyl shift of the methyl group leads to brassicicene C. Although the probable acetyltransferase bsc4 is included in the gene cluster, no acetylation reactions are necessary for brassicicene C biosynthesis. However, the fact that brassicicene E, which is a structurally related compound having an acetoxy group at position 12, was previously isolated from another strain of A.brassicicola suggests that the ATCC 96836 strain might also produce a small amount of brassicicene E. This chain is Fusicoccadiene C-8 hydroxylase, found in Alternaria brassicicola (Dark leaf spot agent).